The chain runs to 439 residues: Ribosomal protein uS12 methylthiotransferase RimO (439 aa).

The MTTase N-terminal domain maps to 7–119; the sequence is KQLCLISLGC…IDIMIAKKQN (113 aa). [4Fe-4S] cluster is bound by residues C16, C50, C82, C151, C155, and C158. The Radical SAM core domain occupies 137–368; the sequence is TGSSVHAYVK…ALKHQNHSFK (232 aa).

Belongs to the methylthiotransferase family. RimO subfamily. It depends on [4Fe-4S] cluster as a cofactor.

The protein resides in the cytoplasm. It carries out the reaction L-aspartate(89)-[ribosomal protein uS12]-hydrogen + (sulfur carrier)-SH + AH2 + 2 S-adenosyl-L-methionine = 3-methylsulfanyl-L-aspartate(89)-[ribosomal protein uS12]-hydrogen + (sulfur carrier)-H + 5'-deoxyadenosine + L-methionine + A + S-adenosyl-L-homocysteine + 2 H(+). Its function is as follows. Catalyzes the methylthiolation of an aspartic acid residue of ribosomal protein uS12. The chain is Ribosomal protein uS12 methylthiotransferase RimO from Helicobacter pylori (strain G27).